The following is an 88-amino-acid chain: Metastasis-suppressor KiSS-1 (88 aa).

Residues 1–13 show a composition bias toward polar residues; the sequence is SVENSRPTGQQLE. The disordered stretch occupies residues 1 to 88; sequence SVENSRPTGQ…REKDLPNYNW (88 aa). The segment covering 33–55 has biased composition (low complexity); the sequence is SATARLSRRGASLSSPAESSGSP. Positions 78 to 88 are enriched in basic and acidic residues; it reads QREKDLPNYNW. Residue Tyr-86 is modified to Phosphotyrosine.

This sequence belongs to the KISS1 family. As to expression, in the hypothalamus, expression increases with puberty in both male and female monkeys. Robust expression in the region of the arcuate nucleus (ARC).

It localises to the secreted. Its function is as follows. Metastasis suppressor protein. May regulate events downstream of cell-matrix adhesion, perhaps involving cytoskeletal reorganization. Generates a C-terminally amidated peptide, metastin which functions as the endogenous ligand of the G-protein coupled receptor GPR54. The receptor is essential for normal gonadotropin-released hormone physiology and for puberty. The hypothalamic KiSS1/GPR54 system is a pivotal factor in central regulation of the gonadotropic axis at puberty and in adulthood. The sequence is that of Metastasis-suppressor KiSS-1 (KISS1) from Macaca mulatta (Rhesus macaque).